The primary structure comprises 310 residues: Cytochrome f (310 aa).

The N-terminal stretch at 1–23 (MRRLIPILLGSLVLSLSILVAPA) is a signal peptide. Heme contacts are provided by tyrosine 28, cysteine 48, cysteine 51, and histidine 52. The chain crosses the membrane as a helical span at residues 277-297 (IYGLLAFFVAVSLAQILLVLK).

This sequence belongs to the cytochrome f family. The 4 large subunits of the cytochrome b6-f complex are cytochrome b6, subunit IV (17 kDa polypeptide, PetD), cytochrome f and the Rieske protein, while the 4 small subunits are PetG, PetL, PetM and PetN. The complex functions as a dimer. The cofactor is heme.

The protein resides in the cellular thylakoid membrane. Its function is as follows. Component of the cytochrome b6-f complex, which mediates electron transfer between photosystem II (PSII) and photosystem I (PSI), cyclic electron flow around PSI, and state transitions. In Prochlorococcus marinus (strain MIT 9303), this protein is Cytochrome f.